The following is a 453-amino-acid chain: MIKKGTLKYKWMMITTLIMFSTIILFCLVIIFFLKDTLRDGEIDEAEHSSSEIVNLVESRSMNNITTLDLTAMLENFEKAIIYDRNGKQLMQSSNENMINFKPDIDFVDPETIQISKHNGIPYLIITEPIHSERFEGYSVLIHSLEGYNNVVRSLYFVAIAFGLLATFIMAGISYIFSTQLTKPLVTMSNKMIQIRRDGFQNKLELKTNYEETDNLIDTFNDMMYQIEESFNQQRQFVEDASHELRTPLQIIQGHLNLIQRWGKKDPAVLEESLNISLEEMNRITKLVEELLLLTKDKVNIQALEFEEVNINEEIRSRIKSLKQLHPDYQFKTHLSKKPLTLQINRHQFEQLLLIFIDNAMKYDKDNKQIEIATQLRNKQISIEITDHGLGIPKEDQEFIFDRFYRVDKSRSRSQGGNGLGLFIAEKIVQQYGGYITVDSEVNQYTTFKIIFK.

2 helical membrane-spanning segments follow: residues 14 to 34 (ITTL…IFFL) and 157 to 177 (FVAI…SYIF). The HAMP domain occupies 179–232 (TQLTKPLVTMSNKMIQIRRDGFQNKLELKTNYEETDNLIDTFNDMMYQIEESFN). The Histidine kinase domain maps to 240-453 (DASHELRTPL…QYTTFKIIFK (214 aa)). Residue His243 is modified to Phosphohistidine; by autocatalysis.

In terms of processing, autophosphorylated.

It localises to the cell membrane. The catalysed reaction is ATP + protein L-histidine = ADP + protein N-phospho-L-histidine.. Functionally, member of the two-component regulatory system ArlS/ArlR. ArlS probably functions as a sensor protein kinase which is autophosphorylated at a histidine residue and transfers its phosphate group to ArlR. The sequence is that of Signal transduction histidine-protein kinase ArlS (arlS) from Staphylococcus haemolyticus (strain JCSC1435).